The sequence spans 562 residues: Dihydroxy-acid dehydratase (562 aa).

D80 serves as a coordination point for Mg(2+). C121 lines the [2Fe-2S] cluster pocket. D122 and K123 together coordinate Mg(2+). The residue at position 123 (K123) is an N6-carboxylysine. C194 provides a ligand contact to [2Fe-2S] cluster. Residue E446 participates in Mg(2+) binding. The active-site Proton acceptor is S472.

The protein belongs to the IlvD/Edd family. In terms of assembly, homodimer. [2Fe-2S] cluster serves as cofactor. Mg(2+) is required as a cofactor.

It catalyses the reaction (2R)-2,3-dihydroxy-3-methylbutanoate = 3-methyl-2-oxobutanoate + H2O. The catalysed reaction is (2R,3R)-2,3-dihydroxy-3-methylpentanoate = (S)-3-methyl-2-oxopentanoate + H2O. The protein operates within amino-acid biosynthesis; L-isoleucine biosynthesis; L-isoleucine from 2-oxobutanoate: step 3/4. Its pathway is amino-acid biosynthesis; L-valine biosynthesis; L-valine from pyruvate: step 3/4. Its function is as follows. Functions in the biosynthesis of branched-chain amino acids. Catalyzes the dehydration of (2R,3R)-2,3-dihydroxy-3-methylpentanoate (2,3-dihydroxy-3-methylvalerate) into 2-oxo-3-methylpentanoate (2-oxo-3-methylvalerate) and of (2R)-2,3-dihydroxy-3-methylbutanoate (2,3-dihydroxyisovalerate) into 2-oxo-3-methylbutanoate (2-oxoisovalerate), the penultimate precursor to L-isoleucine and L-valine, respectively. In Staphylococcus aureus (strain USA300 / TCH1516), this protein is Dihydroxy-acid dehydratase.